The following is a 268-amino-acid chain: L-gamma-glutamyl-L-propargylglycine hydroxylase (268 aa).

The cofactor is Fe(2+).

The catalysed reaction is L-gamma-glutamyl-L-propargylglycine + 2-oxoglutarate + O2 = L-gamma-glutamyl-(3R)-L-beta-ethynylserine + succinate + CO2. It functions in the pathway amino-acid metabolism. The protein operates within antibiotic biosynthesis. Functionally, involved in the biosynthesis of terminal alkyne-containing amino acids such as L-beta-ethynylserine, that are produced as antibiotics by S.cattleya. Catalyzes the hydroxylation of the dipeptide L-gamma-glutamyl-L-propargylglycine, leading to L-gamma-glutamyl-L-beta-ethynylserine. Cannot use L-propargylglycine as substrate. The chain is L-gamma-glutamyl-L-propargylglycine hydroxylase from Streptantibioticus cattleyicolor (strain ATCC 35852 / DSM 46488 / JCM 4925 / NBRC 14057 / NRRL 8057) (Streptomyces cattleya).